A 113-amino-acid polypeptide reads, in one-letter code: U11-theraphotoxin-Hhn1a (113 aa).

An N-terminal signal peptide occupies residues 1-21 (MNTVRVTFLLVFVLAVSLGQA). The propeptide occupies 22-74 (DKDENRMEMQEKTEQGKGYLDFAENLLPQKLEELEAKLLEEDSEESRNSRQKR). Residues 59–69 (LLEEDSEESRN) are compositionally biased toward basic and acidic residues. The interval 59 to 83 (LLEEDSEESRNSRQKRCIGEGVPCD) is disordered. Disulfide bonds link cysteine 75-cysteine 90, cysteine 82-cysteine 95, and cysteine 89-cysteine 110.

The protein belongs to the neurotoxin 14 (magi-1) family. 01 (HNTX-16) subfamily. As to expression, expressed by the venom gland.

It localises to the secreted. Probable ion channel inhibitor. In Cyriopagopus hainanus (Chinese bird spider), this protein is U11-theraphotoxin-Hhn1a.